The sequence spans 296 residues: NAD kinase (296 aa).

The Proton acceptor role is filled by D72. NAD(+) is bound by residues 72–73, 146–147, R157, R174, D176, 187–192, and Q247; these read DG, ND, and TAYALS.

Belongs to the NAD kinase family. The cofactor is a divalent metal cation.

The protein localises to the cytoplasm. The enzyme catalyses NAD(+) + ATP = ADP + NADP(+) + H(+). Involved in the regulation of the intracellular balance of NAD and NADP, and is a key enzyme in the biosynthesis of NADP. Catalyzes specifically the phosphorylation on 2'-hydroxyl of the adenosine moiety of NAD to yield NADP. The sequence is that of NAD kinase from Hahella chejuensis (strain KCTC 2396).